Consider the following 354-residue polypeptide: Uroporphyrinogen decarboxylase (354 aa).

Residues 27–31 (RQAGR), Asp-77, Tyr-154, Thr-209, and His-327 contribute to the substrate site.

It belongs to the uroporphyrinogen decarboxylase family. Homodimer.

It localises to the cytoplasm. The enzyme catalyses uroporphyrinogen III + 4 H(+) = coproporphyrinogen III + 4 CO2. Its pathway is porphyrin-containing compound metabolism; protoporphyrin-IX biosynthesis; coproporphyrinogen-III from 5-aminolevulinate: step 4/4. Catalyzes the decarboxylation of four acetate groups of uroporphyrinogen-III to yield coproporphyrinogen-III. The polypeptide is Uroporphyrinogen decarboxylase (Mannheimia succiniciproducens (strain KCTC 0769BP / MBEL55E)).